We begin with the raw amino-acid sequence, 510 residues long: Cytochrome P450 52C2 (510 aa).

C458 lines the heme pocket.

This sequence belongs to the cytochrome P450 family. The cofactor is heme.

Its subcellular location is the membrane. Functionally, together with an NADPH cytochrome P450 the enzyme system catalyzes the terminal hydroxylation as the first step in the assimilation of alkanes and fatty acids. The polypeptide is Cytochrome P450 52C2 (CYP52C2) (Candida maltosa (Yeast)).